We begin with the raw amino-acid sequence, 78 residues long: Conotoxin 6 (78 aa).

Residues 1-22 form the signal peptide; sequence MKLTCMMIVAVLFLTAWIFITA. Positions 23-51 are excised as a propeptide; it reads DNSRNGIENLPRMRRHEMKNPKASKLNKR. 3 disulfide bridges follow: Cys53/Cys69, Cys60/Cys73, and Cys68/Cys77.

It belongs to the conotoxin O1 superfamily. Expressed by the venom duct.

It localises to the secreted. This chain is Conotoxin 6, found in Conus imperialis (Imperial cone).